Reading from the N-terminus, the 171-residue chain is Large ribosomal subunit protein bL9 (171 aa).

This sequence belongs to the bacterial ribosomal protein bL9 family.

Functionally, binds to the 23S rRNA. This chain is Large ribosomal subunit protein bL9, found in Orientia tsutsugamushi (strain Ikeda) (Rickettsia tsutsugamushi).